The sequence spans 318 residues: Trans-prenyltransferase (318 aa).

The chain crosses the membrane as a helical span at residues 1–21; sequence MLHLIYISIIVVLIIILISYT. Isopentenyl diphosphate contacts are provided by lysine 85, arginine 88, and histidine 122. Mg(2+)-binding residues include aspartate 129 and aspartate 135. Dimethylallyl diphosphate is bound at residue arginine 140. Residue arginine 141 coordinates isopentenyl diphosphate. Residues lysine 216, threonine 217, and glutamine 254 each contribute to the dimethylallyl diphosphate site.

This sequence belongs to the FPP/GGPP synthase family. Asfivirus trans-prenyltransferase subfamily. Mg(2+) is required as a cofactor.

The protein localises to the host endoplasmic reticulum. The protein resides in the host membrane. It catalyses the reaction isopentenyl diphosphate + dimethylallyl diphosphate = (2E)-geranyl diphosphate + diphosphate. It carries out the reaction isopentenyl diphosphate + (2E)-geranyl diphosphate = (2E,6E)-farnesyl diphosphate + diphosphate. The catalysed reaction is isopentenyl diphosphate + (2E,6E)-farnesyl diphosphate = (2E,6E,10E)-geranylgeranyl diphosphate + diphosphate. The enzyme catalyses isopentenyl diphosphate + (2E,6E,10E)-geranylgeranyl diphosphate = (2E,6E,10E,14E)-geranylfarnesyl diphosphate + diphosphate. It participates in isoprenoid biosynthesis; farnesyl diphosphate biosynthesis; farnesyl diphosphate from geranyl diphosphate and isopentenyl diphosphate: step 1/1. Its pathway is isoprenoid biosynthesis; geranyl diphosphate biosynthesis; geranyl diphosphate from dimethylallyl diphosphate and isopentenyl diphosphate: step 1/1. The protein operates within isoprenoid biosynthesis; geranylgeranyl diphosphate biosynthesis; geranylgeranyl diphosphate from farnesyl diphosphate and isopentenyl diphosphate: step 1/1. Its function is as follows. Trans-prenyltransferase that catalyzes the sequential condensation of isopentenyl diphosphate (IPP) with different allylic diphosphates, such as dimethylallyl diphosphate (DMAPP), geranyl diphosphate (GPP), farnesyl diphosphate (FPP) and geranylgeranyl diphosphate (GGPP), farnesyl diphosphate being the best allylic substrate. The chain is Trans-prenyltransferase from African swine fever virus (isolate Warthog/Namibia/Wart80/1980) (ASFV).